The sequence spans 479 residues: Mitochondria-eating protein (479 aa).

2 coiled-coil regions span residues 109 to 161 (ERKL…LATT) and 187 to 223 (LRRLDHLNDCEQQIERLRDELSILDAQKSVLQSRIAR). Disordered stretches follow at residues 220–251 (RIARSRSPSPRRIRSRSPSPLPLRSCSPGRAR) and 456–479 (RSRSRSQNRSRSVSPLLSHLSRSR). The segment covering 235-249 (RSPSPLPLRSCSPGR) has biased composition (low complexity).

This sequence belongs to the MIEAP family.

It is found in the cytoplasm. It localises to the cytosol. The protein localises to the mitochondrion outer membrane. Its subcellular location is the mitochondrion matrix. In terms of biological role, key regulator of mitochondrial quality that mediates the repairing or degradation of unhealthy mitochondria in response to mitochondrial damage. Mediator of mitochondrial protein catabolic process (also named MALM) by mediating the degradation of damaged proteins inside mitochondria by promoting the accumulation in the mitochondrial matrix of hydrolases that are characteristic of the lysosomal lumen. Also involved in mitochondrion degradation of damaged mitochondria by promoting the formation of vacuole-like structures (named MIV), which engulf and degrade unhealthy mitochondria by accumulating lysosomes. Binds cardiolipin. May form molecular condensates (non-membrane-bounded organelles) within mitochondria that compartmentalize and promote cardiolipin metabolism. In Gallus gallus (Chicken), this protein is Mitochondria-eating protein (SPATA18).